Here is a 329-residue protein sequence, read N- to C-terminus: Short-chain dehydrogenase/reductase prx4 (329 aa).

The first 21 residues, 1 to 21 (MIPRWQPASIALLLHLDTLRC), serve as a signal peptide directing secretion. The NADP(+) site is built by Ser58, Ile60, and Asn81. N-linked (GlcNAc...) asparagine glycosylation is present at Asn91. NADP(+)-binding residues include Asp98, Asn121, Lys161, Tyr194, Lys198, and Thr229. The active-site Proton acceptor is the Tyr194. The active-site Lowers pKa of active site Tyr is the Lys198. The chain crosses the membrane as a helical span at residues 238–258 (GPLMAAGLPVSSAHMVGLAVV).

It belongs to the short-chain dehydrogenases/reductases (SDR) family.

The protein resides in the membrane. The protein operates within sesquiterpene biosynthesis. Its function is as follows. Short-chain dehydrogenase/reductase; part of the gene cluster that mediates the biosynthesis of PR-toxin, a bicyclic sesquiterpene belonging to the eremophilane class and acting as a mycotoxin. The first step of the pathway is catalyzed by the aristolochene synthase which performs the cyclization of trans,trans-farnesyl diphosphate (FPP) to the bicyclic sesquiterpene aristolochene. Following the formation of aristolochene, the non-oxygenated aristolochene is converted to the trioxygenated intermediate eremofortin B, via 7-epi-neopetasone. This conversion appears to involve three enzymes, a hydroxysterol oxidase-like enzyme, the quinone-oxidase prx3 that forms the quinone-type-structure in the bicyclic nucleus of aristolochene with the C8-oxo group and the C-3 hydroxyl group, and the P450 monooxygenase prx9 that introduces the epoxide at the double bond between carbons 1 and 2. No monoxy or dioxy-intermediates have been reported to be released to the broth, so these three early oxidative reactions may be coupled together. Eremofortin B is further oxidized by another P450 monooxygenase, that introduces a second epoxide between carbons 7 and 11 prior to acetylation to eremofortin A by the acetyltransferase prx11. The second epoxidation may be performed by a second P450 monooxygenase. After the acetylation step, eremofortin A is converted to eremofortin C and then to PR-toxin. First the conversion of eremofortin A to eremofortin C proceeds by oxidation of the side chain of the molecule at C-12 and is catalyzed by the short-chain oxidoreductase prx1. The cytochrome P450 monooxygenase prx8 also plays a role in this step. The primary alcohol formed at C-12 is finally oxidized by the short-chain alcohol dehydrogenase prx4 that forms PR-toxin. The sequence is that of Short-chain dehydrogenase/reductase prx4 from Penicillium rubens (strain ATCC 28089 / DSM 1075 / NRRL 1951 / Wisconsin 54-1255) (Penicillium chrysogenum).